Here is a 165-residue protein sequence, read N- to C-terminus: Phosphopantetheine adenylyltransferase (165 aa).

Residue Ser8 participates in substrate binding. Residues Ser8–Phe9 and His16 each bind ATP. Positions 40, 72, and 86 each coordinate substrate. ATP is bound by residues Gly87–Arg89, Glu97, and Tyr122–Ser128.

The protein belongs to the bacterial CoaD family. In terms of assembly, homohexamer. The cofactor is Mg(2+).

It localises to the cytoplasm. The catalysed reaction is (R)-4'-phosphopantetheine + ATP + H(+) = 3'-dephospho-CoA + diphosphate. The protein operates within cofactor biosynthesis; coenzyme A biosynthesis; CoA from (R)-pantothenate: step 4/5. Its function is as follows. Reversibly transfers an adenylyl group from ATP to 4'-phosphopantetheine, yielding dephospho-CoA (dPCoA) and pyrophosphate. In Synechococcus sp. (strain WH7803), this protein is Phosphopantetheine adenylyltransferase.